The primary structure comprises 345 residues: MNRAQNAPQPSKLTRNLGLQGRNTFGFDASAELAYEITSAEQIPEVMESIAAQKLSWRVLGGGSNVILPKVLPGATLLMNITGAEITSSNQEHSLVAVGGGVNWHDFVLWSLDNDLPGLENLALIPGTVGAAPIQNIGAYGIEVADYIDSIEAFDAHTDSFVTLPKSACHFAYRDSYFKQHPHRFIVTKVVFKLPKQWQARIHYADLANQFAANATPCPEEIFLAVCKIRTRKLPDPKVIGNAGSFFQNPIVPNEQHETLLGKHPNLVSYPDAPGKRKLAAGWLIDQCGFKGERMGNVGVYENQALVLVNHGGGTAQDILGLAKCIQEKVRKEFGVSLEIEPNIL.

An FAD-binding PCMH-type domain is found at 27–197 (FDASAELAYE…TKVVFKLPKQ (171 aa)). Residue R174 is part of the active site. Residue S245 is the Proton donor of the active site. The active site involves E341.

The protein belongs to the MurB family. It depends on FAD as a cofactor.

It localises to the cytoplasm. The catalysed reaction is UDP-N-acetyl-alpha-D-muramate + NADP(+) = UDP-N-acetyl-3-O-(1-carboxyvinyl)-alpha-D-glucosamine + NADPH + H(+). It functions in the pathway cell wall biogenesis; peptidoglycan biosynthesis. In terms of biological role, cell wall formation. The sequence is that of UDP-N-acetylenolpyruvoylglucosamine reductase from Polynucleobacter asymbioticus (strain DSM 18221 / CIP 109841 / QLW-P1DMWA-1) (Polynucleobacter necessarius subsp. asymbioticus).